Consider the following 373-residue polypeptide: Queuine tRNA-ribosyltransferase (373 aa).

Aspartate 90 serves as the catalytic Proton acceptor. Residues 90 to 94 (DSGGF), aspartate 144, glutamine 193, and glycine 220 contribute to the substrate site. The tract at residues 251–257 (GVGTPED) is RNA binding. The active-site Nucleophile is aspartate 270. The segment at 275-279 (TRNAR) is RNA binding; important for wobble base 34 recognition. Residues cysteine 308, cysteine 310, cysteine 313, and histidine 339 each contribute to the Zn(2+) site.

Belongs to the queuine tRNA-ribosyltransferase family. In terms of assembly, homodimer. Within each dimer, one monomer is responsible for RNA recognition and catalysis, while the other monomer binds to the replacement base PreQ1. The cofactor is Zn(2+).

The enzyme catalyses 7-aminomethyl-7-carbaguanine + guanosine(34) in tRNA = 7-aminomethyl-7-carbaguanosine(34) in tRNA + guanine. Its pathway is tRNA modification; tRNA-queuosine biosynthesis. Catalyzes the base-exchange of a guanine (G) residue with the queuine precursor 7-aminomethyl-7-deazaguanine (PreQ1) at position 34 (anticodon wobble position) in tRNAs with GU(N) anticodons (tRNA-Asp, -Asn, -His and -Tyr). Catalysis occurs through a double-displacement mechanism. The nucleophile active site attacks the C1' of nucleotide 34 to detach the guanine base from the RNA, forming a covalent enzyme-RNA intermediate. The proton acceptor active site deprotonates the incoming PreQ1, allowing a nucleophilic attack on the C1' of the ribose to form the product. After dissociation, two additional enzymatic reactions on the tRNA convert PreQ1 to queuine (Q), resulting in the hypermodified nucleoside queuosine (7-(((4,5-cis-dihydroxy-2-cyclopenten-1-yl)amino)methyl)-7-deazaguanosine). The sequence is that of Queuine tRNA-ribosyltransferase from Campylobacter jejuni subsp. jejuni serotype O:23/36 (strain 81-176).